The sequence spans 1131 residues: Tyrosine-protein kinase JAK2 (1131 aa).

The segment at 1 to 239 (MGMACLTMTE…RYRFRRFIEQ (239 aa)) is interaction with cytokine/interferon/growth hormone receptors. The FERM domain occupies 37–380 (PVLQVYLYHS…GYYRLTADAH (344 aa)). A Phosphotyrosine; by autocatalysis modification is found at tyrosine 119. Phosphotyrosine is present on residues tyrosine 372 and tyrosine 373. The region spanning 401-482 (HGPISMDFAI…NLKDLLNCYQ (82 aa)) is the SH2; atypical domain. Serine 523 carries the post-translational modification Phosphoserine. One can recognise a Protein kinase 1 domain in the interval 545 to 809 (LIFNESLGQG…AIIRDLNSLF (265 aa)). Residues tyrosine 570 and tyrosine 813 each carry the phosphotyrosine modification. Residues 849 to 1126 (LKFLQQLGKG…RDLALRVDQI (278 aa)) enclose the Protein kinase 2 domain. Residue 855–863 (LGKGNFGSV) coordinates ATP. Tyrosine 868 is modified (phosphotyrosine; by autocatalysis). Lysine 882 is a binding site for ATP. 2 positions are modified to phosphotyrosine; by autocatalysis: tyrosine 966 and tyrosine 972. The active-site Proton acceptor is the aspartate 976. Residues tyrosine 1007 and tyrosine 1008 each carry the phosphotyrosine; by autocatalysis modification.

Belongs to the protein kinase superfamily. Tyr protein kinase family. JAK subfamily. In terms of assembly, interacts with IL23R, SKB1 and STAM2. Interacts with EPOR. Interacts with LYN. Interacts with SIRPA. Interacts with SH2B1. Interacts with TEC. Interacts with IFNGR2 (via intracellular domain). Interacts with LEPR (Isoform B). Interacts with HSP90AB1; promotes functional activation in a heat shock-dependent manner. Interacts with STRA6. Interacts with ASB2; the interaction targets JAK2 for Notch-induced proteasomal degradation. Mg(2+) is required as a cofactor. In terms of processing, autophosphorylated, leading to regulate its activity. Leptin promotes phosphorylation on tyrosine residues, including phosphorylation on Tyr-813. Autophosphorylation on Tyr-119 in response to EPO down-regulates its kinase activity. Autophosphorylation on Tyr-868, Tyr-966 and Tyr-972 in response to growth hormone (GH) are required for maximal kinase activity. Also phosphorylated by TEC. Phosphorylated on tyrosine residues in response to interferon gamma signaling. Phosphorylated on tyrosine residues in response to a signaling cascade that is activated by increased cellular retinol. Undergoes Notch-induced ubiquitination and subsequent proteasomal degradation which is mediated by ASB1 or ASB2, the substrate-recognition components of probable ECS E3 ubiquitin-protein ligase complexes.

It is found in the endomembrane system. The protein localises to the cytoplasm. The protein resides in the nucleus. It catalyses the reaction L-tyrosyl-[protein] + ATP = O-phospho-L-tyrosyl-[protein] + ADP + H(+). With respect to regulation, regulated by autophosphorylation, can both activate or decrease activity. Heme regulates its activity by enhancing the phosphorylation on Tyr-1007 and Tyr-1008. Its function is as follows. Non-receptor tyrosine kinase involved in various processes such as cell growth, development, differentiation or histone modifications. Mediates essential signaling events in both innate and adaptive immunity. In the cytoplasm, plays a pivotal role in signal transduction via its association with type I receptors such as growth hormone (GHR), prolactin (PRLR), leptin (LEPR), erythropoietin (EPOR), thrombopoietin (THPO); or type II receptors including IFN-alpha, IFN-beta, IFN-gamma and multiple interleukins. Following ligand-binding to cell surface receptors, phosphorylates specific tyrosine residues on the cytoplasmic tails of the receptor, creating docking sites for STATs proteins. Subsequently, phosphorylates the STATs proteins once they are recruited to the receptor. Phosphorylated STATs then form homodimer or heterodimers and translocate to the nucleus to activate gene transcription. For example, cell stimulation with erythropoietin (EPO) during erythropoiesis leads to JAK2 autophosphorylation, activation, and its association with erythropoietin receptor (EPOR) that becomes phosphorylated in its cytoplasmic domain. Then, STAT5 (STAT5A or STAT5B) is recruited, phosphorylated and activated by JAK2. Once activated, dimerized STAT5 translocates into the nucleus and promotes the transcription of several essential genes involved in the modulation of erythropoiesis. Part of a signaling cascade that is activated by increased cellular retinol and that leads to the activation of STAT5 (STAT5A or STAT5B). In addition, JAK2 mediates angiotensin-2-induced ARHGEF1 phosphorylation. Plays a role in cell cycle by phosphorylating CDKN1B. Cooperates with TEC through reciprocal phosphorylation to mediate cytokine-driven activation of FOS transcription. In the nucleus, plays a key role in chromatin by specifically mediating phosphorylation of 'Tyr-41' of histone H3 (H3Y41ph), a specific tag that promotes exclusion of CBX5 (HP1 alpha) from chromatin. Up-regulates the potassium voltage-gated channel activity of KCNA3. In Sus scrofa (Pig), this protein is Tyrosine-protein kinase JAK2.